Here is a 230-residue protein sequence, read N- to C-terminus: MACDLILVLDAPSPRDIAPVLKRLSGTVRWAKIGLEMYTACGPDCVREVADLGYNVFLDLKLHDIPNTVAKAVESAARLPIKMLTLHTCGGREMMSWAAKAQQQHAPELLLLGVTVLTSMSAVHLHEVGVPDSPEAQVVRLGRLAVDAGLRGLVCSPLEIAPLRAALPSDVTLVTPGIRPRDAAADDQTRVMTPAEAARTGANFLVIGRPIFKAPDPVAAARDILAELKS.

Substrate is bound by residues Asp-10, Lys-32, 59–68, Thr-118, Arg-179, Gln-188, Gly-208, and Arg-209; that span reads DLKLHDIPNT. Lys-61 (proton donor) is an active-site residue.

Belongs to the OMP decarboxylase family. Type 1 subfamily. In terms of assembly, homodimer.

It catalyses the reaction orotidine 5'-phosphate + H(+) = UMP + CO2. Its pathway is pyrimidine metabolism; UMP biosynthesis via de novo pathway; UMP from orotate: step 2/2. Catalyzes the decarboxylation of orotidine 5'-monophosphate (OMP) to uridine 5'-monophosphate (UMP). The polypeptide is Orotidine 5'-phosphate decarboxylase (Opitutus terrae (strain DSM 11246 / JCM 15787 / PB90-1)).